We begin with the raw amino-acid sequence, 95 residues long: Large ribosomal subunit protein bL27 (95 aa).

Positions 1-8 are excised as a propeptide; the sequence is MEMNLQFF. The tract at residues 1 to 34 is disordered; sequence MEMNLQFFSHHKGGGSTSNGRDSAGRRLGTKRAD.

The protein belongs to the bacterial ribosomal protein bL27 family. In terms of processing, the N-terminus is cleaved by ribosomal processing cysteine protease Prp.

The chain is Large ribosomal subunit protein bL27 from Pediococcus pentosaceus (strain ATCC 25745 / CCUG 21536 / LMG 10740 / 183-1w).